The chain runs to 318 residues: Methionyl-tRNA formyltransferase (318 aa).

S110 to P113 provides a ligand contact to (6S)-5,6,7,8-tetrahydrofolate.

The protein belongs to the Fmt family.

The catalysed reaction is L-methionyl-tRNA(fMet) + (6R)-10-formyltetrahydrofolate = N-formyl-L-methionyl-tRNA(fMet) + (6S)-5,6,7,8-tetrahydrofolate + H(+). In terms of biological role, attaches a formyl group to the free amino group of methionyl-tRNA(fMet). The formyl group appears to play a dual role in the initiator identity of N-formylmethionyl-tRNA by promoting its recognition by IF2 and preventing the misappropriation of this tRNA by the elongation apparatus. The sequence is that of Methionyl-tRNA formyltransferase from Ligilactobacillus salivarius (strain UCC118) (Lactobacillus salivarius).